The sequence spans 100 residues: Large ribosomal subunit protein uL23 (100 aa).

The protein belongs to the universal ribosomal protein uL23 family. As to quaternary structure, part of the 50S ribosomal subunit. Contacts protein L29, and trigger factor when it is bound to the ribosome.

One of the early assembly proteins it binds 23S rRNA. One of the proteins that surrounds the polypeptide exit tunnel on the outside of the ribosome. Forms the main docking site for trigger factor binding to the ribosome. The sequence is that of Large ribosomal subunit protein uL23 from Yersinia enterocolitica serotype O:8 / biotype 1B (strain NCTC 13174 / 8081).